Consider the following 7481-residue polypeptide: Polyketide synthase GfsA (7481 aa).

Residues 24-1020 are loading module (LM); sequence ASDEPIAVIG…ETAEFVRARL (997 aa). Residues 26–451 enclose the Ketosynthase family 3 (KS3) 1 domain; it reads DEPIAVIGLS…GTNCHVVVSA (426 aa). A disordered region spans residues 60 to 80; that stretch reads RVPADRETPPSTEEESADGEA. The active-site For decarboxylation activity of LM is Gln-197. The active-site For acyltransferase activity of LM is Ser-662. Residues 945-1020 enclose the Carrier 1 domain; sequence PDPVETVRQL…ETAEFVRARL (76 aa). Residue Ser-980 is modified to O-(pantetheine 4'-phosphoryl)serine. One can recognise a Ketosynthase family 3 (KS3) 2 domain in the interval 1038–1454; that stretch reads DEPIAVVAMS…GTNAHVILEQ (417 aa). 4 module regions span residues 1038 to 2517, 2538 to 4063, 4084 to 5636, and 5655 to 7400; these read DEPI…AGEL, EDPI…LQRI, DDPI…GSEV, and DEPV…GEQL. Active-site for beta-ketoacyl synthase 1 activity residues include Cys-1201, His-1336, and His-1376. The Carrier 2 domain maps to 2442–2517; the sequence is RVLLDLVRGR…ALAEHLAGEL (76 aa). Residue Ser-2477 is modified to O-(pantetheine 4'-phosphoryl)serine. The Ketosynthase family 3 (KS3) 3 domain occupies 2538–2964; the sequence is EDPIAIVAMS…GTNAHVIIEE (427 aa). Residues Cys-2711, His-2846, and His-2886 each act as for beta-ketoacyl synthase 2 activity in the active site. In terms of domain architecture, Carrier 3 spans 3988-4063; that stretch reads QALQDLVLTE…ATTEYLLQRI (76 aa). At Ser-4023 the chain carries O-(pantetheine 4'-phosphoryl)serine. One can recognise a Ketosynthase family 3 (KS3) 4 domain in the interval 4084 to 4514; it reads DDPIAIVAMG…GTNAHVILEQ (431 aa). Catalysis depends on for beta-ketoacyl synthase 3 activity residues Cys-4261, His-4396, and His-4436. Residues 5561–5636 form the Carrier 4 domain; the sequence is TALLDLIRGQ…ALAEYVGSEV (76 aa). Ser-5596 is modified (O-(pantetheine 4'-phosphoryl)serine). Residues 5655–6081 enclose the Ketosynthase family 3 (KS3) 5 domain; sequence DEPVAIIGMS…GTNAHVILEQ (427 aa). Residues Cys-5828, His-5963, and His-6003 each act as for beta-ketoacyl synthase 4 activity in the active site. The segment at 6561–6685 is N-terminal hotdog fold; it reads HPLLGAAVAL…GVLASGAATV (125 aa). Residues 6561–6841 form the PKS/mFAS DH domain; the sequence is HPLLGAAVAL…LRPVSADTIA (281 aa). His-6593 acts as the Proton acceptor; for dehydratase activity in catalysis. The segment at 6700–6841 is C-terminal hotdog fold; sequence ATAVDIDGLY…LRPVSADTIA (142 aa). Asp-6761 acts as the Proton donor; for dehydratase activity in catalysis. Positions 7325 to 7400 constitute a Carrier 5 domain; that stretch reads QELLDFVCEH…LLAGHIGEQL (76 aa). Residue Ser-7360 is modified to O-(pantetheine 4'-phosphoryl)serine.

Homodimer. The loading module (LM, residues 13-926) dimerizes. LM cross-links to its cognate acyl-carrier domain in a manner that seems physiological; mutation of residues in the 2 domains alters reactions efficiency in a manner predicted by the cross-linked crystal. It depends on pantetheine 4'-phosphate as a cofactor.

It participates in antibiotic biosynthesis. Functionally, first protein in the synthesis of the 16-membered macrolide antibiotics FD-891 and FD-892. Composed of 5 modules; the first is a loading module (LM) that synthesizes a starter unit used by the first elongation module for polyketide chain elongation. The starter unit is extended by multiple rounds of addition of malonyl-CoA or methylmalonyl-CoA, and other modifications to help generate the final products. The loading module (residues 1-927, LM with an inactive acyltransferase domain) preferentially decarboxylates malonyl-GfsA acyl carrier protein of the LM (ACP-LM) over methylmalonyl-GfsA ACP-LM and has no activity on malonyl-CoA or methymalonyl-CoA. LM decarboxylates malonyl-ACP-LM better than the malonyl-ACP-1 module of GfsA (i.e. the next module in the same protein) and has no activity on other malonyl-ACP modules. The chain is Polyketide synthase GfsA from Streptomyces halstedii.